Reading from the N-terminus, the 132-residue chain is Small ribosomal subunit protein uS8 (132 aa).

This sequence belongs to the universal ribosomal protein uS8 family. In terms of assembly, part of the 30S ribosomal subunit. Contacts proteins S5 and S12.

In terms of biological role, one of the primary rRNA binding proteins, it binds directly to 16S rRNA central domain where it helps coordinate assembly of the platform of the 30S subunit. The protein is Small ribosomal subunit protein uS8 of Baumannia cicadellinicola subsp. Homalodisca coagulata.